The primary structure comprises 22 residues: Putative lactoylglutathione lyase (22 aa).

The tract at residues 1–22 (ITACLDPDGWKEPGPLPGISTK) is disordered. The Proton donor/acceptor role is filled by Glu-12.

It belongs to the glyoxalase I family. Zn(2+) serves as cofactor.

The enzyme catalyses (R)-S-lactoylglutathione = methylglyoxal + glutathione. The protein operates within secondary metabolite metabolism; methylglyoxal degradation; (R)-lactate from methylglyoxal: step 1/2. In terms of biological role, catalyzes the conversion of hemimercaptal, formed from methylglyoxal and glutathione, to S-lactoylglutathione. The chain is Putative lactoylglutathione lyase from Pinus strobus (Eastern white pine).